The primary structure comprises 118 residues: ATP synthase subunit gamma, chloroplastic (118 aa).

Cys30 and Cys36 form a disulfide bridge.

It belongs to the ATPase gamma chain family. As to quaternary structure, F-type ATPases have 2 components, CF(1) - the catalytic core - and CF(0) - the membrane proton channel. CF(1) has five subunits: alpha(3), beta(3), gamma(1), delta(1), epsilon(1). CF(0) has four main subunits: a, b, b' and c.

It is found in the plastid. The protein localises to the chloroplast thylakoid membrane. In terms of biological role, produces ATP from ADP in the presence of a proton gradient across the membrane. The gamma chain is believed to be important in regulating ATPase activity and the flow of protons through the CF(0) complex. Functionally, inceptin is a proteolytic fragment produced by insect larvae that previously ingested the protein. This peptide mediate plant perception of herbivory through the induction of volatile, phenylpropanoid and protease inhibitor defenses such as ethylene, jasmonic acid and salicylic acid for example. This chain is ATP synthase subunit gamma, chloroplastic, found in Vigna unguiculata (Cowpea).